We begin with the raw amino-acid sequence, 130 residues long: Glycine cleavage system H protein (130 aa).

The Lipoyl-binding domain maps to 23–105; sequence IGIIGITDFA…YGKGWMIKVE (83 aa). Position 64 is an N6-lipoyllysine (K64).

It belongs to the GcvH family. As to quaternary structure, the glycine cleavage system is composed of four proteins: P, T, L and H. It depends on (R)-lipoate as a cofactor.

Functionally, the glycine cleavage system catalyzes the degradation of glycine. The H protein shuttles the methylamine group of glycine from the P protein to the T protein. The polypeptide is Glycine cleavage system H protein (Carboxydothermus hydrogenoformans (strain ATCC BAA-161 / DSM 6008 / Z-2901)).